Reading from the N-terminus, the 610-residue chain is MARMSTNSTTPLSHIRNFSIVAHIDHGKSTLADRLIQTTGGLAEREMSEQVLDNMDIERERGITIKAQTVRLHYQANNGEKYILNLIDTPGHVDFAYEVSRSLSACEGSLLVVDASQGVEAQTLANVYQAIDNNHELVTVLNKIDLPAAEPDRIKEQIEEVIGIDASEAVLISAKTGLGIPDVLEAIVRKLPAPKSPGGEKAPLKALLVDSWYDTYLGVMVLVRIIDGVLTKGQTIRMMGTDAKYQVERVGVLTPKMVNVDSLGPGEIGFITASIKEVADTRVGDTITEDKRPTAQALPGFKPAQPVVFCGLFPVDAADFEDLRAAMGKLRLNDASFSFEMESSAALGFGFRCGFLGLLHLEIIQERLEREFDLDLIATAPSVVYKMYMTDGTERELHNPADMPDVVKISEIHEPWIRATILTPDDYLGGILKLCQDRRGIQIELTYVGTRAMLTYDLPLNEVVFDFYDRLKSISKGYASFDYTLTDHREGNLVKMSILVNGEPVDALSMMVHRTAAEKRGRDMCEKLKELIPKHMFKIPIQAAIGGNVIARETISALRKDVTAKCYGGDATRKRKLLDKQKAGKKRMRQFGKVEIPQEAFIAALKMGDE.

The tr-type G domain occupies S13–K195. GTP-binding positions include D25–T30 and N142–D145.

It belongs to the TRAFAC class translation factor GTPase superfamily. Classic translation factor GTPase family. LepA subfamily.

It localises to the cell inner membrane. The enzyme catalyses GTP + H2O = GDP + phosphate + H(+). Its function is as follows. Required for accurate and efficient protein synthesis under certain stress conditions. May act as a fidelity factor of the translation reaction, by catalyzing a one-codon backward translocation of tRNAs on improperly translocated ribosomes. Back-translocation proceeds from a post-translocation (POST) complex to a pre-translocation (PRE) complex, thus giving elongation factor G a second chance to translocate the tRNAs correctly. Binds to ribosomes in a GTP-dependent manner. The protein is Elongation factor 4 of Rhizobium etli (strain CIAT 652).